The sequence spans 203 residues: Dephospho-CoA kinase (203 aa).

Positions 4-203 (VIGITGGIAT…EEGYIQSESE (200 aa)) constitute a DPCK domain. 12 to 17 (ATGKST) is a binding site for ATP.

This sequence belongs to the CoaE family.

It is found in the cytoplasm. The enzyme catalyses 3'-dephospho-CoA + ATP = ADP + CoA + H(+). Its pathway is cofactor biosynthesis; coenzyme A biosynthesis; CoA from (R)-pantothenate: step 5/5. Catalyzes the phosphorylation of the 3'-hydroxyl group of dephosphocoenzyme A to form coenzyme A. The sequence is that of Dephospho-CoA kinase from Staphylococcus epidermidis (strain ATCC 35984 / DSM 28319 / BCRC 17069 / CCUG 31568 / BM 3577 / RP62A).